A 416-amino-acid chain; its full sequence is Serine/threonine-protein kinase 26 (416 aa).

Alanine 2 is subject to N-acetylalanine. Serine 4 is subject to Phosphoserine. The 251-residue stretch at 24 to 274 (FTKLERIGKG…AKELLKHKFI (251 aa)) folds into the Protein kinase domain. ATP is bound by residues 30 to 38 (IGKGSFGEV) and lysine 53. Catalysis depends on aspartate 144, which acts as the Proton acceptor. Threonine 178 bears the Phosphothreonine; by autocatalysis mark. The disordered stretch occupies residues 297–340 (EGHSDDESDSEGSDSESTSRENNTHPEWSFTTVRKKPDPKKVQN). A phosphoserine mark is found at serine 300, serine 304, serine 306, serine 309, and serine 325. Phosphothreonine is present on residues threonine 327 and threonine 328.

It belongs to the protein kinase superfamily. STE Ser/Thr protein kinase family. STE20 subfamily. In terms of assembly, homodimer. Interacts with PDCD10. Interacts with GOLGA2. Interacts with CTTNBP2NL. Interacts with RIPOR1 (via C-terminus); this interaction occurs in a PDCD10-dependent and Rho-independent manner. Interacts with PDCD10; this interaction is required for the association of STK26 with RIPOR1. Part of the core of STRIPAK complexes composed of PP2A catalytic and scaffolding subunits, the striatins (PP2A regulatory subunits), the striatin-associated proteins MOB4, STRIP1 and STRIP2, PDCD10 and members of the STE20 kinases, such as STK24 and STK26. Requires Mg(2+) as cofactor.

Its subcellular location is the cytoplasm. The protein resides in the golgi apparatus. The enzyme catalyses L-seryl-[protein] + ATP = O-phospho-L-seryl-[protein] + ADP + H(+). It catalyses the reaction L-threonyl-[protein] + ATP = O-phospho-L-threonyl-[protein] + ADP + H(+). With respect to regulation, interaction with Golgi matrix protein GOLGA2 leads to autophosphorylation on Thr-178, possibly as a consequence of stabilization of dimer formation. May also be activated by C-terminal cleavage. Functionally, serine/threonine-protein kinase that acts as a mediator of cell growth. Modulates apoptosis. In association with STK24 negatively regulates Golgi reorientation in polarized cell migration upon RHO activation. Phosphorylates ATG4B at 'Ser-383', thereby increasing autophagic flux. Part of the striatin-interacting phosphatase and kinase (STRIPAK) complexes. STRIPAK complexes have critical roles in protein (de)phosphorylation and are regulators of multiple signaling pathways including Hippo, MAPK, nuclear receptor and cytoskeleton remodeling. Different types of STRIPAK complexes are involved in a variety of biological processes such as cell growth, differentiation, apoptosis, metabolism and immune regulation. The polypeptide is Serine/threonine-protein kinase 26 (Homo sapiens (Human)).